We begin with the raw amino-acid sequence, 189 residues long: HTH-type transcriptional regulator Hpr (189 aa).

One can recognise an HTH marR-type domain in the interval 12–156 (ALLYSHKIVQ…ISAIVRRLYG (145 aa)). Positions 62–85 (ISEIAKYGVMHVSTAFNFSKKLED) form a DNA-binding region, H-T-H motif.

In terms of assembly, homodimer.

Negative regulator of protease production and sporulation. The polypeptide is HTH-type transcriptional regulator Hpr (Exiguobacterium sibiricum (strain DSM 17290 / CCUG 55495 / CIP 109462 / JCM 13490 / 255-15)).